The following is a 150-amino-acid chain: MKKRIIIGNWKTNKTQKEVKEFFKILNASLKNKNICCTFGVAPVAIHLELAKSLAPKQMIIAAQDANYISSGAFTGTISWSQLKDIKIKYVIVGHSERRMYYNETDDIVNKKVKNLLENKMIPILCIGGNIEEFNNKKTYQVCATQLKKA.

Substrate-binding residues include Asn9 and Lys11. His95 (electrophile) is an active-site residue.

The protein belongs to the triosephosphate isomerase family. Homodimer.

It is found in the cytoplasm. It carries out the reaction D-glyceraldehyde 3-phosphate = dihydroxyacetone phosphate. It participates in carbohydrate biosynthesis; gluconeogenesis. The protein operates within carbohydrate degradation; glycolysis; D-glyceraldehyde 3-phosphate from glycerone phosphate: step 1/1. The protein is Triosephosphate isomerase (tpiA) of Mycoplasmoides pirum (Mycoplasma pirum).